A 608-amino-acid polypeptide reads, in one-letter code: MSCKKCCSSSQTKWILAGSVSMTLVLAISMILGLTLYQRTRPGCENDAVCRPDADMLDYLQNIGQISHRDGLLVTWYHAANSKKEMEAALNSDVMVLEADVTVEGFNTANETEVPIMAHPPAIYSDNTLKEWLEAVLASSQKGIKLDFKSLKAVGPSLDLLRQLTEAGRIRRPVWINADILKGPNVPISTEVNATQFLALVQEKYPKATISPGFTTLYVHQLPNSTYTQAMVETMEELVRALPQKVTFPMRAVMTRAAWPHFSWLLSQSERYSLTLWQGASDPVSVEDLLFIRDNSAPHQIYYDLFEPVLSQFKQLALNTTRKRTFYTGGSLIPVLQQPKGDGLEVEWLALEVNDKGRKAAITVPDREGMILLDVGLQEPEVGNPVPVLRTPGGSVLTLESCLLHLAVHATRWSIHVNITEPAALRPSLATLAHLSTLGHLPWPVWVGATVSYGSFVVPGHIAGRELLTAVAEVFPHVTVAPAWPEEMLGSGYQEQMVTEMLELCQGLRQPVSFQLQAGPLGQSPANTVARLLAFSPRATVTVYHSSAGNSYADVWAGLWAARAVDRTRVYYRIPQEYRKDLLAHVDRHRPSSRTGPSYVEGFPGESR.

The chain crosses the membrane as a helical span at residues 14-34; that stretch reads WILAGSVSMTLVLAISMILGL. Residues 588-608 are disordered; sequence RHRPSSRTGPSYVEGFPGESR.

This sequence belongs to the menorin family.

Its subcellular location is the membrane. This chain is Protein FAM151A (Fam151a), found in Rattus norvegicus (Rat).